The primary structure comprises 289 residues: Protease HtpX homolog (289 aa).

2 helical membrane-spanning segments follow: residues 8 to 28 (LALL…VIGG) and 29 to 49 (SSGL…SWYQ). H132 serves as a coordination point for Zn(2+). E133 is a catalytic residue. A Zn(2+)-binding site is contributed by H136. Helical transmembrane passes span 151–171 (VAGA…FGGI) and 183–203 (LGVL…QLAI). E208 is a binding site for Zn(2+).

It belongs to the peptidase M48B family. The cofactor is Zn(2+).

It is found in the cell inner membrane. The polypeptide is Protease HtpX homolog (Nostoc sp. (strain PCC 7120 / SAG 25.82 / UTEX 2576)).